Here is a 264-residue protein sequence, read N- to C-terminus: Flagellar brake protein YcgR 1 (264 aa).

The region spanning 132-249 (QRREFFRLES…RLAMIERYIA (118 aa)) is the PilZ domain.

Belongs to the YcgR family. As to quaternary structure, monomer. Interacts with the flagellar basal bodies.

The protein localises to the bacterial flagellum basal body. In terms of biological role, acts as a flagellar brake, regulating swimming and swarming in a bis-(3'-5') cyclic diguanylic acid (c-di-GMP)-dependent manner. Binds 1 c-di-GMP dimer per subunit. Increasing levels of c-di-GMP lead to decreased motility. This is Flagellar brake protein YcgR 1 from Dechloromonas aromatica (strain RCB).